Reading from the N-terminus, the 346-residue chain is S-adenosylmethionine:tRNA ribosyltransferase-isomerase (346 aa).

Belongs to the QueA family. As to quaternary structure, monomer.

It localises to the cytoplasm. It catalyses the reaction 7-aminomethyl-7-carbaguanosine(34) in tRNA + S-adenosyl-L-methionine = epoxyqueuosine(34) in tRNA + adenine + L-methionine + 2 H(+). It functions in the pathway tRNA modification; tRNA-queuosine biosynthesis. Transfers and isomerizes the ribose moiety from AdoMet to the 7-aminomethyl group of 7-deazaguanine (preQ1-tRNA) to give epoxyqueuosine (oQ-tRNA). The chain is S-adenosylmethionine:tRNA ribosyltransferase-isomerase from Cereibacter sphaeroides (strain KD131 / KCTC 12085) (Rhodobacter sphaeroides).